Reading from the N-terminus, the 165-residue chain is Lipoprotein signal peptidase (165 aa).

A run of 3 helical transmembrane segments spans residues 12 to 32 (WLWL…LILQ), 70 to 90 (WFFA…MYRA), and 102 to 122 (ALII…GFVV). Active-site residues include aspartate 123 and aspartate 141. A helical transmembrane segment spans residues 137 to 157 (FNLADTAICIGAALVVLEGFL).

Belongs to the peptidase A8 family.

Its subcellular location is the cell inner membrane. It carries out the reaction Release of signal peptides from bacterial membrane prolipoproteins. Hydrolyzes -Xaa-Yaa-Zaa-|-(S,diacylglyceryl)Cys-, in which Xaa is hydrophobic (preferably Leu), and Yaa (Ala or Ser) and Zaa (Gly or Ala) have small, neutral side chains.. It functions in the pathway protein modification; lipoprotein biosynthesis (signal peptide cleavage). This protein specifically catalyzes the removal of signal peptides from prolipoproteins. The protein is Lipoprotein signal peptidase of Cronobacter sakazakii (strain ATCC BAA-894) (Enterobacter sakazakii).